A 303-amino-acid chain; its full sequence is Putative HTH-type transcriptional regulatory protein Mpal_0031 (303 aa).

The region spanning 132–189 is the HTH cro/C1-type domain; that stretch reads LRGLREQRNMSLGDLGAVLGVSRRTISKYESGMGTTLEIAIKIEEVFDSGVIESIDLL. The H-T-H motif DNA-binding region spans 143–162; that stretch reads LGDLGAVLGVSRRTISKYES.

The protein is Putative HTH-type transcriptional regulatory protein Mpal_0031 of Methanosphaerula palustris (strain ATCC BAA-1556 / DSM 19958 / E1-9c).